We begin with the raw amino-acid sequence, 173 residues long: Translation initiation factor IF-3 (173 aa).

Belongs to the IF-3 family. Monomer.

It is found in the cytoplasm. IF-3 binds to the 30S ribosomal subunit and shifts the equilibrium between 70S ribosomes and their 50S and 30S subunits in favor of the free subunits, thus enhancing the availability of 30S subunits on which protein synthesis initiation begins. The protein is Translation initiation factor IF-3 of Caulobacter vibrioides (strain ATCC 19089 / CIP 103742 / CB 15) (Caulobacter crescentus).